Reading from the N-terminus, the 510-residue chain is Zinc metalloproteinase (510 aa).

Positions 1–24 are cleaved as a signal peptide; the sequence is MKSKLICIIMVIAFQAHFTMTVKA. Positions 25–200 are excised as a propeptide; the sequence is DSVGEEKLQN…ILKKQNMLSE (176 aa). Zn(2+) is bound at residue His-349. Glu-350 is an active-site residue. The Zn(2+) site is built by His-353 and Glu-373. His-437 (proton donor) is an active-site residue.

Belongs to the peptidase M4 family. It depends on Zn(2+) as a cofactor.

It is found in the secreted. Its function is as follows. Probably linked to the pathogenesis of listerial infection. This chain is Zinc metalloproteinase (mpl), found in Listeria monocytogenes serovar 1/2a (strain ATCC BAA-679 / EGD-e).